The primary structure comprises 239 residues: Uridylate kinase (239 aa).

10–13 contributes to the ATP binding site; that stretch reads KLSG. The interval 18–23 is involved in allosteric activation by GTP; sequence GEDGYG. Gly-52 lines the UMP pocket. ATP contacts are provided by Gly-53 and Arg-57. UMP contacts are provided by residues Asp-72 and 133 to 140; that span reads TGNPYFTT. ATP-binding residues include Thr-160, Tyr-166, and Asp-169.

Belongs to the UMP kinase family. In terms of assembly, homohexamer.

Its subcellular location is the cytoplasm. The catalysed reaction is UMP + ATP = UDP + ADP. Its pathway is pyrimidine metabolism; CTP biosynthesis via de novo pathway; UDP from UMP (UMPK route): step 1/1. Allosterically activated by GTP. Inhibited by UTP. Catalyzes the reversible phosphorylation of UMP to UDP. The chain is Uridylate kinase from Chlorobium chlorochromatii (strain CaD3).